The chain runs to 152 residues: MEALFQAGSILMKVNTLQGKKMVESGLQSGDLSLSQSWPSYLPLPADLEILQQKVAGVQRELEDFKEEALKAIRYLEDAFCQMSGVLAQQEEQAARVKQRLREEEDRGIVRNKVLTFLLPREKQLREHCQRLENMLVRSHNPLRAIRKSQAD.

A coiled-coil region spans residues 46–109 (ADLEILQQKV…RLREEEDRGI (64 aa)).

The chain is Coiled-coil domain-containing protein 182 (Ccdc182) from Mus musculus (Mouse).